The following is a 226-amino-acid chain: UPF0173 metal-dependent hydrolase TM_1162 (226 aa).

This sequence belongs to the UPF0173 family.

In Thermotoga maritima (strain ATCC 43589 / DSM 3109 / JCM 10099 / NBRC 100826 / MSB8), this protein is UPF0173 metal-dependent hydrolase TM_1162.